The primary structure comprises 270 residues: Phospholysine phosphohistidine inorganic pyrophosphate phosphatase (270 aa).

Mg(2+)-binding residues include Asp17 and Ser19. Residues 17–19 (DIS), 54–55 (TN), and Lys189 each bind substrate. Asp214 is a binding site for Mg(2+).

It belongs to the HAD-like hydrolase superfamily. Homodimer. It depends on Mg(2+) as a cofactor. Expressed in brain, and at lower levels in liver and kidney. Detected in thyroid (at protein level). Expressed in liver, kidney and moderately in brain.

It is found in the cytoplasm. The protein resides in the nucleus. The enzyme catalyses diphosphate + H2O = 2 phosphate + H(+). Functionally, phosphatase that hydrolyzes imidodiphosphate, 3-phosphohistidine and 6-phospholysine. Has broad substrate specificity and can also hydrolyze inorganic diphosphate, but with lower efficiency. This chain is Phospholysine phosphohistidine inorganic pyrophosphate phosphatase (LHPP), found in Homo sapiens (Human).